Consider the following 198-residue polypeptide: Segregation and condensation protein B (198 aa).

It belongs to the ScpB family. Homodimer. Homodimerization may be required to stabilize the binding of ScpA to the Smc head domains. Component of a cohesin-like complex composed of ScpA, ScpB and the Smc homodimer, in which ScpA and ScpB bind to the head domain of Smc. The presence of the three proteins is required for the association of the complex with DNA.

The protein resides in the cytoplasm. Functionally, participates in chromosomal partition during cell division. May act via the formation of a condensin-like complex containing Smc and ScpA that pull DNA away from mid-cell into both cell halves. In Streptococcus mutans serotype c (strain ATCC 700610 / UA159), this protein is Segregation and condensation protein B.